The following is an 886-amino-acid chain: Semaphorin-6B (886 aa).

An N-terminal signal peptide occupies residues 1–26 (MWTPRVPPPRPALSFFLLLLLGVTYG). Residues 27-605 (LFPEEPPPLS…VSVNLLVTSS (579 aa)) lie on the Extracellular side of the membrane. In terms of domain architecture, Sema spans 32–525 (PPPLSVAPRD…FPRCVVRVPV (494 aa)). The N-linked (GlcNAc...) asparagine glycan is linked to Asn75. Cystine bridges form between Cys117–Cys127 and Cys145–Cys154. N-linked (GlcNAc...) asparagine glycosylation is found at Asn156 and Asn292. Intrachain disulfides connect Cys268/Cys379 and Cys293/Cys338. 3 N-linked (GlcNAc...) asparagine glycosylation sites follow: Asn387, Asn442, and Asn463. Cystine bridges form between Cys487-Cys519, Cys528-Cys546, Cys534-Cys580, and Cys538-Cys554. A helical membrane pass occupies residues 606–626 (VAAFVVGAVVSGFSVGWFVGL). Residues 627-886 (RERRELARRK…TGERTAPPVP (260 aa)) are Cytoplasmic-facing. Disordered stretches follow at residues 655–677 (RLGERRGTGPGGRGGAGGGPGGP), 697–731 (HGGPHDLDTGLLPTPEQTPLPQKRLPTPHPHAHAL), and 761–886 (EQPQ…PPVP). The segment covering 662–674 (TGPGGRGGAGGGP) has biased composition (gly residues). At Arg667 the chain carries Omega-N-methylarginine. The segment covering 707-718 (LLPTPEQTPLPQ) has biased composition (low complexity).

The protein belongs to the semaphorin family. As to quaternary structure, homodimer. Binds specifically the SH3 domain of the protooncogene C-SRC. In adulthood, it is expressed ubiquitously.

Its subcellular location is the cell membrane. Functions as a cell surface repellent for mossy fibers of developing neurons in the hippocampus where it plays a role in axon guidance. May function through the PLXNA4 receptor expressed by mossy cell axons. This is Semaphorin-6B (Sema6b) from Mus musculus (Mouse).